Reading from the N-terminus, the 179-residue chain is Large ribosomal subunit protein uL5 (179 aa).

This sequence belongs to the universal ribosomal protein uL5 family. In terms of assembly, part of the 50S ribosomal subunit; part of the 5S rRNA/L5/L18/L25 subcomplex. Contacts the 5S rRNA and the P site tRNA. Forms a bridge to the 30S subunit in the 70S ribosome.

This is one of the proteins that bind and probably mediate the attachment of the 5S RNA into the large ribosomal subunit, where it forms part of the central protuberance. In the 70S ribosome it contacts protein S13 of the 30S subunit (bridge B1b), connecting the 2 subunits; this bridge is implicated in subunit movement. Contacts the P site tRNA; the 5S rRNA and some of its associated proteins might help stabilize positioning of ribosome-bound tRNAs. The sequence is that of Large ribosomal subunit protein uL5 from Caldanaerobacter subterraneus subsp. tengcongensis (strain DSM 15242 / JCM 11007 / NBRC 100824 / MB4) (Thermoanaerobacter tengcongensis).